The primary structure comprises 154 residues: 6,7-dimethyl-8-ribityllumazine synthase (154 aa).

Residues Trp-22, 56–58, and 80–82 each bind 5-amino-6-(D-ribitylamino)uracil; these read AWE and CVI. 85-86 is a binding site for (2S)-2-hydroxy-3-oxobutyl phosphate; that stretch reads DT. His-88 serves as the catalytic Proton donor. Asn-113 lines the 5-amino-6-(D-ribitylamino)uracil pocket. (2S)-2-hydroxy-3-oxobutyl phosphate is bound at residue Arg-127.

It belongs to the DMRL synthase family. Forms an icosahedral capsid composed of 60 subunits, arranged as a dodecamer of pentamers.

The enzyme catalyses (2S)-2-hydroxy-3-oxobutyl phosphate + 5-amino-6-(D-ribitylamino)uracil = 6,7-dimethyl-8-(1-D-ribityl)lumazine + phosphate + 2 H2O + H(+). It participates in cofactor biosynthesis; riboflavin biosynthesis; riboflavin from 2-hydroxy-3-oxobutyl phosphate and 5-amino-6-(D-ribitylamino)uracil: step 1/2. Functionally, catalyzes the formation of 6,7-dimethyl-8-ribityllumazine by condensation of 5-amino-6-(D-ribitylamino)uracil with 3,4-dihydroxy-2-butanone 4-phosphate. This is the penultimate step in the biosynthesis of riboflavin. This chain is 6,7-dimethyl-8-ribityllumazine synthase, found in Xanthomonas oryzae pv. oryzae (strain MAFF 311018).